The following is a 574-amino-acid chain: Eukaryotic translation initiation factor 3 subunit D (574 aa).

Positions 153–178 (QRRGGNARQGQRGQGGRFGGDRPKER) are disordered. Residues 154–163 (RRGGNARQGQ) are compositionally biased toward low complexity. The RNA gate stretch occupies residues 312-326 (PVETLTVSETSAEPP). Residues 555–574 (EGTFDSERESSEEENSDDDQ) form a disordered region. The span at 564–574 (SSEEENSDDDQ) shows a compositional bias: acidic residues.

It belongs to the eIF-3 subunit D family. Component of the eukaryotic translation initiation factor 3 (eIF-3) complex.

The protein resides in the cytoplasm. Functionally, mRNA cap-binding component of the eukaryotic translation initiation factor 3 (eIF-3) complex, which is involved in protein synthesis of a specialized repertoire of mRNAs and, together with other initiation factors, stimulates binding of mRNA and methionyl-tRNAi to the 40S ribosome. The eIF-3 complex specifically targets and initiates translation of a subset of mRNAs involved in cell proliferation. In the eIF-3 complex, eif3d specifically recognizes and binds the 7-methylguanosine cap of a subset of mRNAs. This is Eukaryotic translation initiation factor 3 subunit D from Caenorhabditis briggsae.